A 37-amino-acid chain; its full sequence is Large ribosomal subunit protein bL36 (37 aa).

This sequence belongs to the bacterial ribosomal protein bL36 family.

This chain is Large ribosomal subunit protein bL36, found in Parasynechococcus marenigrum (strain WH8102).